Here is a 135-residue protein sequence, read N- to C-terminus: Peptide methionine sulfoxide reductase MsrB (135 aa).

Residues 9–131 form the MsrB domain; sequence DDYWRSKLTD…NSASIQFEEE (123 aa). Residues C48, C51, C97, and C100 each coordinate Zn(2+). The active-site Nucleophile is the C120.

This sequence belongs to the MsrB Met sulfoxide reductase family. It depends on Zn(2+) as a cofactor.

It carries out the reaction L-methionyl-[protein] + [thioredoxin]-disulfide + H2O = L-methionyl-(R)-S-oxide-[protein] + [thioredoxin]-dithiol. The sequence is that of Peptide methionine sulfoxide reductase MsrB from Teredinibacter turnerae (strain ATCC 39867 / T7901).